We begin with the raw amino-acid sequence, 326 residues long: Glycolipid sulfotransferase MRA_1383 (326 aa).

40–45 lines the 3'-phosphoadenylyl sulfate pocket; that stretch reads KSGLTW. The Proton acceptor role is filled by His97. 116-124 provides a ligand contact to 3'-phosphoadenylyl sulfate; sequence RDPRDAAVS.

It belongs to the sulfotransferase 1 family.

Its function is as follows. Involved in the synthesis of cell wall sulfolipids. This Mycobacterium tuberculosis (strain ATCC 25177 / H37Ra) protein is Glycolipid sulfotransferase MRA_1383.